Reading from the N-terminus, the 76-residue chain is Conotoxin MaIr332 (76 aa).

Residues Met-1–Ala-21 form the signal peptide. The propeptide occupies Asp-22 to Asn-48. Cystine bridges form between Cys-51-Cys-66, Cys-58-Cys-70, and Cys-65-Cys-75.

This sequence belongs to the conotoxin O1 superfamily. As to expression, expressed by the venom duct.

It is found in the secreted. This chain is Conotoxin MaIr332, found in Conus marmoreus (Marble cone).